A 312-amino-acid polypeptide reads, in one-letter code: Homoserine O-acetyltransferase (312 aa).

Cys142 acts as the Acyl-thioester intermediate in catalysis. Residues Lys163 and Ser194 each contribute to the substrate site. Catalysis depends on His237, which acts as the Proton acceptor. Residue Glu239 is part of the active site. Residue Arg251 participates in substrate binding.

It belongs to the MetA family.

The protein resides in the cytoplasm. It carries out the reaction L-homoserine + acetyl-CoA = O-acetyl-L-homoserine + CoA. The protein operates within amino-acid biosynthesis; L-methionine biosynthesis via de novo pathway; O-acetyl-L-homoserine from L-homoserine: step 1/1. Transfers an acetyl group from acetyl-CoA to L-homoserine, forming acetyl-L-homoserine. The polypeptide is Homoserine O-acetyltransferase (Catenibacterium mitsuokai (strain DSM 15897 / JCM 10609 / CCUG 48821 A / CIP 106738 / RCA14-39)).